Here is a 212-residue protein sequence, read N- to C-terminus: uncharacterized protein (212 aa).

One can recognise a Toprim domain in the interval Asn105 to Lys187.

This is an uncharacterized protein from Mycoplasma pneumoniae (strain ATCC 29342 / M129 / Subtype 1) (Mycoplasmoides pneumoniae).